Here is a 701-residue protein sequence, read N- to C-terminus: MNDLFASTNFGTEKLLEKELLSLGVSDIKIIKGGIYYKSNDLLLYKSLMWSRIASRIYLCIKIFTINNIDDLYDHVYSINWTEIFHIHNTFLVNFKGTNNFIRNSLFGALVTKDAIIDQFQNKYASRPNVNLIEPDIRIKLVLLNNNILHIMLDLSGEPLNKRGYRQFYNTTPIKENLATAIVLSSGWNENTPMIDPMCGSGTFLIEAAMISSDRAPGLKRLKWGFQFWKKYNKNLWKKVLEEAEEKFKIGIKKCFQNYFIGYDYDPEIIKKAKKNASNAGVLKIIQFLTKDVNNLKNVYHKEQEGIILSNPPYGERYQTENKLVGLYVQLGITAKKYFKNWKLSIFSASTFLLDFLQMQSHEKYFFKNGPLNCIQKNFLIFFKNSSITTNEFKDRLNKNFKKLKKWINSEKLESFRVYHADLPNYNIIVDVYDKWVVIQEYQAPKSIDHNKAFKRLCDAIYYTKEVLSISINNIVLKTRIKNKNKTQYKKLFNSNDFITIKEYHAKFLVNLTDYVDTGLFSDKRLVRKLLGVLAKGKDFLNLFSYTGTATVYAGLGHANSTTSVDISNTYIKWSARNMSLNNLTSSQHNFIQYDCLKWIKKTNQKFDLIFINPPTFSNSKKMQQSFDLKRDYLDVMIHLKKILRHDGTIIFSSSTRNFEINFNCIKKMQLHAKKITNKIQSKDHLKNSNIYHSWLIKHIK.

The 113-residue stretch at 43–155 (LLYKSLMWSR…NNILHIMLDL (113 aa)) folds into the THUMP domain.

Belongs to the methyltransferase superfamily. RlmKL family.

The protein resides in the cytoplasm. The catalysed reaction is guanosine(2445) in 23S rRNA + S-adenosyl-L-methionine = N(2)-methylguanosine(2445) in 23S rRNA + S-adenosyl-L-homocysteine + H(+). The enzyme catalyses guanosine(2069) in 23S rRNA + S-adenosyl-L-methionine = N(2)-methylguanosine(2069) in 23S rRNA + S-adenosyl-L-homocysteine + H(+). Specifically methylates the guanine in position 2445 (m2G2445) and the guanine in position 2069 (m7G2069) of 23S rRNA. The polypeptide is Ribosomal RNA large subunit methyltransferase K/L (Buchnera aphidicola subsp. Acyrthosiphon pisum (strain APS) (Acyrthosiphon pisum symbiotic bacterium)).